Consider the following 363-residue polypeptide: 3-dehydroquinate synthase (363 aa).

NAD(+) is bound by residues 134–135, Lys147, and Lys156; that span reads TT. Positions 189, 254, and 271 each coordinate Zn(2+).

It belongs to the sugar phosphate cyclases superfamily. Dehydroquinate synthase family. Requires Co(2+) as cofactor. Zn(2+) serves as cofactor. It depends on NAD(+) as a cofactor.

The protein localises to the cytoplasm. The enzyme catalyses 7-phospho-2-dehydro-3-deoxy-D-arabino-heptonate = 3-dehydroquinate + phosphate. The protein operates within metabolic intermediate biosynthesis; chorismate biosynthesis; chorismate from D-erythrose 4-phosphate and phosphoenolpyruvate: step 2/7. Its function is as follows. Catalyzes the conversion of 3-deoxy-D-arabino-heptulosonate 7-phosphate (DAHP) to dehydroquinate (DHQ). The chain is 3-dehydroquinate synthase from Prochlorococcus marinus (strain AS9601).